A 570-amino-acid polypeptide reads, in one-letter code: Urease subunit alpha (570 aa).

In terms of domain architecture, Urease spans 132 to 570 (GGIDTHVHFI…LPMAQRYFLF (439 aa)). Residues His137 and His139 each contribute to the Ni(2+) site. Substrate contacts are provided by His139 and Ala170. A Ni(2+)-binding site is contributed by Lys220. Position 220 is an N6-carboxylysine (Lys220). The substrate site is built by His222 and His249. Ni(2+)-binding residues include His249 and His275. His323 functions as the Proton donor in the catalytic mechanism. A Ni(2+)-binding site is contributed by Asp363. Ala366 contacts substrate.

It belongs to the metallo-dependent hydrolases superfamily. Urease alpha subunit family. Heterotrimer of UreA (gamma), UreB (beta) and UreC (alpha) subunits. Three heterotrimers associate to form the active enzyme. Ni cation serves as cofactor. Carboxylation allows a single lysine to coordinate two nickel ions.

It is found in the cytoplasm. It carries out the reaction urea + 2 H2O + H(+) = hydrogencarbonate + 2 NH4(+). It participates in nitrogen metabolism; urea degradation; CO(2) and NH(3) from urea (urease route): step 1/1. Its activity is regulated as follows. Inhibited by fluoride. This Sporosarcina pasteurii (Bacillus pasteurii) protein is Urease subunit alpha.